A 65-amino-acid polypeptide reads, in one-letter code: Cold shock-like protein CspB (65 aa).

The CSD domain occupies 3–62 (GKVKWFNNEKGFGFIEMEGSEDVFVHFSAIQSDGYKALEEGQEVSFDITEGNRGPQAANV).

In terms of assembly, homodimer.

The protein localises to the cytoplasm. This Bacillus cereus protein is Cold shock-like protein CspB (cspB).